We begin with the raw amino-acid sequence, 151 residues long: U-scoloptoxin(17)-Er2a (151 aa).

The signal sequence occupies residues 1-22; that stretch reads MKSFFVVFAIVFQATLVALSLA.

This sequence belongs to the scoloptoxin-17 family. Post-translationally, contains 5 disulfide bonds. As to expression, expressed by the venom gland.

The protein resides in the secreted. The sequence is that of U-scoloptoxin(17)-Er2a from Ethmostigmus rubripes (Giant centipede).